The sequence spans 524 residues: Nucleoporin NUP56 (524 aa).

The tract at residues 1 to 219 (MADDPHNTST…SSMAKFASST (219 aa)) is disordered. 3 stretches are compositionally biased toward basic and acidic residues: residues 28 to 80 (VKED…EPEK), 114 to 168 (THDE…KEVE), and 179 to 199 (SAEKPKIEEKKDESKDTKVDK). The short motif at 37–44 (ARRELKQT) is the Nuclear localization signal element. The stretch at 111-133 (KKRTHDELEQDGKEEEEKKEGEK) forms a coiled coil. Residues 200-219 (PQTSSSAFANSSMAKFASST) show a composition bias toward polar residues. FG repeat units lie at residues 223–224 (FG), 226–227 (FG), 237–238 (FG), 247–248 (FG), 266–267 (FG), 312–313 (FG), and 328–329 (FG). Disordered stretches follow at residues 247 to 284 (FGSKSADASAAPAGPPKLSFGSASAASPFASLNGQAGG) and 300 to 371 (GSSA…GEEK). Over residues 248–277 (GSKSADASAAPAGPPKLSFGSASAASPFAS) the composition is skewed to low complexity. 2 stretches are compositionally biased toward acidic residues: residues 332–345 (ESDEEDEGEGEEGE) and 352–362 (GEGEEKEEEEK). Positions 345–376 (EENKSENGEGEEKEEEEKEEKASGEEKKKFKL) form a coiled coil. One can recognise a RanBD1 domain in the interval 377-475 (QKVHIDDGEG…TPILPAMKFQ (99 aa)). Positions 503–524 (SQANATQFSNMVEKIKEKLAAA) form a coiled coil.

As to quaternary structure, the nuclear pore complex (NPC) constitutes the exclusive means of nucleocytoplasmic transport. NPCs allow the passive diffusion of ions and small molecules and the active, nuclear transport receptor-mediated bidirectional transport of macromolecules such as proteins, RNAs, ribonucleoparticles (RNPs), and ribosomal subunits across the nuclear envelope. The 55-60 MDa NPC is composed of at least 28 different subunits: AMO1, ELYS, GLE1, GLE2, MLP1, NDC1, NIC96, NSP1, NUP133, NUP145, NUP152, NUP159, NUP170, NUP188, NUP192, NUP37, NUP49, NUP53, NUP56, NUP57, NUP82, NUP84, NUP85, POM152, POM33, POM34, SEC13 and SEH1. Due to its 8-fold rotational symmetry, all subunits are present with 8 copies or multiples thereof.

Its subcellular location is the nucleus. The protein localises to the nuclear pore complex. It is found in the nucleus membrane. In terms of biological role, functions as a component of the nuclear pore complex (NPC). NPC components, collectively referred to as nucleoporins (NUPs), can play the role of both NPC structural components and of docking or interaction partners for transiently associated nuclear transport factors. Active directional transport is assured by both, a Phe-Gly (FG) repeat affinity gradient for these transport factors across the NPC and a transport cofactor concentration gradient across the nuclear envelope (GSP1 and GSP2 GTPases associated predominantly with GTP in the nucleus, with GDP in the cytoplasm). This Chaetomium thermophilum (strain DSM 1495 / CBS 144.50 / IMI 039719) (Thermochaetoides thermophila) protein is Nucleoporin NUP56 (NUP56).